The following is a 339-amino-acid chain: MQNIYLCLTAFARGTYPDDAAIAGAFDELMSGDAPDAAIGGFLVGLAALGERPSDIAAGARALRSRMTRIEAPVGAIDTCGTGGDGKGAWNISTTAAIIAAGAGATVAKHGNRAASSKSGSSDVLAQLGVKLDCPPAAVERSLAEARVGFLFAPAHHAAVRHVGPARQALKVRTVFNLLGPLSNPAGVKRQLLGVYDRRWLVPIAEALRDLGCEHALVICGQDGMDELTTTTGSDIAELRDGDIREYSFHPEEAGLALVREADLQGGTPADNAAAIRALLDGQQGAFRDIAILNAGAALVLAGLATTIPEGTSLAAAAIDDGRAKAALMRMVAISNGEA.

Residues Gly81, Gly84–Asp85, Asn91–Thr94, Lys109–Ser117, and Ser121 contribute to the 5-phospho-alpha-D-ribose 1-diphosphate site. Anthranilate is bound at residue Gly81. A Mg(2+)-binding site is contributed by Ser93. Asn112 serves as a coordination point for anthranilate. An anthranilate-binding site is contributed by Arg167. 2 residues coordinate Mg(2+): Asp226 and Glu227.

It belongs to the anthranilate phosphoribosyltransferase family. Homodimer. Mg(2+) is required as a cofactor.

The enzyme catalyses N-(5-phospho-beta-D-ribosyl)anthranilate + diphosphate = 5-phospho-alpha-D-ribose 1-diphosphate + anthranilate. Its pathway is amino-acid biosynthesis; L-tryptophan biosynthesis; L-tryptophan from chorismate: step 2/5. In terms of biological role, catalyzes the transfer of the phosphoribosyl group of 5-phosphorylribose-1-pyrophosphate (PRPP) to anthranilate to yield N-(5'-phosphoribosyl)-anthranilate (PRA). The protein is Anthranilate phosphoribosyltransferase of Maricaulis maris (strain MCS10) (Caulobacter maris).